The sequence spans 495 residues: Lysine--tRNA ligase (495 aa).

Glu406 and Glu413 together coordinate Mg(2+).

Belongs to the class-II aminoacyl-tRNA synthetase family. In terms of assembly, homodimer. Requires Mg(2+) as cofactor.

Its subcellular location is the cytoplasm. The catalysed reaction is tRNA(Lys) + L-lysine + ATP = L-lysyl-tRNA(Lys) + AMP + diphosphate. The sequence is that of Lysine--tRNA ligase from Leuconostoc mesenteroides subsp. mesenteroides (strain ATCC 8293 / DSM 20343 / BCRC 11652 / CCM 1803 / JCM 6124 / NCDO 523 / NBRC 100496 / NCIMB 8023 / NCTC 12954 / NRRL B-1118 / 37Y).